A 188-amino-acid chain; its full sequence is UPF0461 protein C5orf24 (188 aa).

Residues 1 to 10 (MMHPVASSNP) are compositionally biased toward polar residues. Positions 1 to 20 (MMHPVASSNPAFCGPGKPSC) are disordered. The residue at position 37 (S37) is a Phosphoserine. K75 is covalently cross-linked (Glycyl lysine isopeptide (Lys-Gly) (interchain with G-Cter in SUMO2)). The segment at 79–142 (KKKKNLNRSG…GYKVSPGRPP (64 aa)) is disordered. Positions 80–92 (KKKNLNRSGKRGR) are enriched in basic residues. The span at 94–107 (SGTTKSAGYRTSTG) shows a compositional bias: polar residues. Residues S121 and S180 each carry the phosphoserine modification. Residue K184 forms a Glycyl lysine isopeptide (Lys-Gly) (interchain with G-Cter in SUMO2) linkage.

Belongs to the UPF0461 family.

The chain is UPF0461 protein C5orf24 (C5orf24) from Homo sapiens (Human).